Reading from the N-terminus, the 437-residue chain is MAGGLSQLVAYGAQDVYLTGNPQITFFKTVYRRYTNFAIESIQQTINGSVGFGNKVSTQISRNGDLITDIVVEFVLTKGGNGGTTYYPAEELLQDVELEIGGQRIDKHYNDWFRTYDALFRMNDDRYNYRRMTDWVNNELVGAQKRFYVPLIFFFNQTPGLALPLIALQYHEVKLYFTLASQVQGVNYNGSSAIAGAAQPTMSVWVDYIFLDTQERTRFAQLPHEYLIEQLQFTGSETATPSATTQASQNIRLNFNHPTKYLAWNFNNPTNYGQYTALANIPGACSGAGTAAATVTTPDYGNTGTYNEQLAVLDSAKIQLNGQDRFATRKGSYFNKVQPYQSIGGVTPAGVYLYSFALKPAGRQPSGTCNFSRIDNATLSLTYKTCSIDATSPAAVLGNTETVTANTATLLTALNIYAKNYNVLRIMSGMGGLAYAN.

4 N-linked (Glc...) asparagine; by host glycosylation sites follow: asparagine 280, asparagine 302, asparagine 399, and asparagine 406.

This sequence belongs to the NCLDV major capsid protein family. In terms of processing, myristoylated at the C-terminus. Glycosylated; highly branched oligosaccharides. The pattern of glycosylation sites are unusual.

It is found in the virion. Its function is as follows. Major capsid protein self-assembles to form an icosahedral capsid with a pseudo T=169 symmetry, about 190 nm in diameter, and consisting of 1680 major capsid proteins trimers. The capsid consists in 5040 copies of the major capsid protein (hexamers), 60 copies of the penton protein (pentamers) and 1800 minor capsid proteins of different types. The minor capsid proteins form a hexagonal network below the outer capsid shell, stabilizing the capsid by binding neighboring capsomers together. The sequence is that of Major capsid protein from Chlorella (PBCV-1).